Consider the following 166-residue polypeptide: Small ribosomal subunit protein uS4 (166 aa).

An S4 RNA-binding domain is found at 103-165 (RRLQTVVYKK…PTSPYFKKAQ (63 aa)).

This sequence belongs to the universal ribosomal protein uS4 family. As to quaternary structure, part of the 30S ribosomal subunit. Contacts protein S5. The interaction surface between S4 and S5 is involved in control of translational fidelity.

In terms of biological role, one of the primary rRNA binding proteins, it binds directly to 16S rRNA where it nucleates assembly of the body of the 30S subunit. Functionally, with S5 and S12 plays an important role in translational accuracy. This Ignicoccus hospitalis (strain KIN4/I / DSM 18386 / JCM 14125) protein is Small ribosomal subunit protein uS4.